A 227-amino-acid chain; its full sequence is Hydroxylase/desaturase asaB (227 aa).

It belongs to the asaB hydroxylase/desaturase family.

It participates in secondary metabolite biosynthesis. Hydroxylase/desaturase; part of the gene cluster that mediates the biosynthesis of aspergillic acid, a hydroxamic acid-containing pyrazinone with aliphatic side chains that originates from leucine (Leu) and isoleucine (Ile). Aspergillic acid has antibiotic properties and was shown to be lethal to mice. The first step in the pathway is the production of deoxyaspergillic acid via a condensation between the Ile amine and the Leu carboxylic acid, followed by a reductive release from the protein forming the dipeptide aldehyde NH(2)-Leu-Ile-CHO, which could undergo an intermolecular cyclization resulting in a dihydropyrazinone. As the NRPS asaC lacks a condensation domain, it is improbable that it is responsible for condensation of Leu and Ile. One possibility is that asaC acts on a previously condensed dipeptide and functions as a Leu-Ile reductase to yield deoxyaspergillic acid. After asaC forms deoxyaspergillic acid, the cytochrome P450 asaD oxidizes the pyrazinone to the hydroxamic acid-containing bioactive metabolite aspergillic acid. The hydroxylase/desaturase asaB can then convert aspergillic acid to hydroxyaspergillic acid. Both aspergillic acid and hydroxyaspergillic acid can form complexes with iron producing ferriaspergillin analogs. The polypeptide is Hydroxylase/desaturase asaB (Aspergillus flavus (strain ATCC 200026 / FGSC A1120 / IAM 13836 / NRRL 3357 / JCM 12722 / SRRC 167)).